The primary structure comprises 266 residues: 3-methyl-2-oxobutanoate hydroxymethyltransferase (266 aa).

Positions 43 and 82 each coordinate Mg(2+). 3-methyl-2-oxobutanoate-binding positions include 43-44, D82, and K110; that span reads DS. E112 is a binding site for Mg(2+). Residue E179 is the Proton acceptor of the active site.

It belongs to the PanB family. As to quaternary structure, homodecamer; pentamer of dimers. It depends on Mg(2+) as a cofactor.

The protein localises to the cytoplasm. It catalyses the reaction 3-methyl-2-oxobutanoate + (6R)-5,10-methylene-5,6,7,8-tetrahydrofolate + H2O = 2-dehydropantoate + (6S)-5,6,7,8-tetrahydrofolate. It participates in cofactor biosynthesis; (R)-pantothenate biosynthesis; (R)-pantoate from 3-methyl-2-oxobutanoate: step 1/2. Its function is as follows. Catalyzes the reversible reaction in which hydroxymethyl group from 5,10-methylenetetrahydrofolate is transferred onto alpha-ketoisovalerate to form ketopantoate. This chain is 3-methyl-2-oxobutanoate hydroxymethyltransferase, found in Psychrobacter arcticus (strain DSM 17307 / VKM B-2377 / 273-4).